Consider the following 428-residue polypeptide: Adenylosuccinate synthetase (428 aa).

GTP-binding positions include 11–17 and 39–41; these read GDEGKGK and GHT. The active-site Proton acceptor is the Asp12. Mg(2+) contacts are provided by Asp12 and Gly39. IMP-binding positions include 12–15, 37–40, Thr130, Arg144, Asn226, Thr241, and Arg305; these read DEGK and NAGH. Residue His40 is the Proton donor of the active site. 301–307 contacts substrate; the sequence is VTTGRKR. Residues Arg307, 333-335, and 415-417 contribute to the GTP site; these read KLD and GTG.

This sequence belongs to the adenylosuccinate synthetase family. As to quaternary structure, homodimer. Requires Mg(2+) as cofactor.

Its subcellular location is the cytoplasm. The catalysed reaction is IMP + L-aspartate + GTP = N(6)-(1,2-dicarboxyethyl)-AMP + GDP + phosphate + 2 H(+). It functions in the pathway purine metabolism; AMP biosynthesis via de novo pathway; AMP from IMP: step 1/2. In terms of biological role, plays an important role in the de novo pathway and in the salvage pathway of purine nucleotide biosynthesis. Catalyzes the first committed step in the biosynthesis of AMP from IMP. The sequence is that of Adenylosuccinate synthetase from Candida tropicalis (strain ATCC MYA-3404 / T1) (Yeast).